We begin with the raw amino-acid sequence, 150 residues long: Large ribosomal subunit protein bL9 (150 aa).

This sequence belongs to the bacterial ribosomal protein bL9 family.

Binds to the 23S rRNA. This is Large ribosomal subunit protein bL9 from Neisseria gonorrhoeae (strain ATCC 700825 / FA 1090).